A 341-amino-acid polypeptide reads, in one-letter code: Ribosomal RNA small subunit methyltransferase H (341 aa).

S-adenosyl-L-methionine-binding positions include 47 to 49 (GGY), D64, F91, D109, and Q116. The disordered stretch occupies residues 292 to 318 (VAASEDEASRNPRARSAKLRAGVRTPA).

Belongs to the methyltransferase superfamily. RsmH family.

It is found in the cytoplasm. It catalyses the reaction cytidine(1402) in 16S rRNA + S-adenosyl-L-methionine = N(4)-methylcytidine(1402) in 16S rRNA + S-adenosyl-L-homocysteine + H(+). In terms of biological role, specifically methylates the N4 position of cytidine in position 1402 (C1402) of 16S rRNA. In Sinorhizobium fredii (strain NBRC 101917 / NGR234), this protein is Ribosomal RNA small subunit methyltransferase H.